Here is a 486-residue protein sequence, read N- to C-terminus: Regulatory protein ViaA (486 aa).

The protein belongs to the ViaA family. As to quaternary structure, homodimer. Interacts with RavA.

The protein localises to the cytoplasm. Component of the RavA-ViaA chaperone complex, which may act on the membrane to optimize the function of some of the respiratory chains. ViaA stimulates the ATPase activity of RavA. The chain is Regulatory protein ViaA from Erwinia tasmaniensis (strain DSM 17950 / CFBP 7177 / CIP 109463 / NCPPB 4357 / Et1/99).